We begin with the raw amino-acid sequence, 252 residues long: Ribosome assembly factor mrt4 (252 aa).

Belongs to the universal ribosomal protein uL10 family. In terms of assembly, associates with the pre-60S ribosomal particle.

Its subcellular location is the nucleus. The protein localises to the nucleolus. It localises to the cytoplasm. In terms of biological role, component of the ribosome assembly machinery. Nuclear paralog of the ribosomal protein P0, it binds pre-60S subunits at an early stage of assembly in the nucleolus, and is replaced by P0 in cytoplasmic pre-60S subunits and mature 80S ribosomes. The sequence is that of Ribosome assembly factor mrt4 from Neurospora crassa (strain ATCC 24698 / 74-OR23-1A / CBS 708.71 / DSM 1257 / FGSC 987).